A 282-amino-acid polypeptide reads, in one-letter code: Protoheme IX farnesyltransferase (282 aa).

The next 9 membrane-spanning stretches (helical) occupy residues 9-29, 39-59, 79-99, 102-122, 139-159, 165-185, 210-230, 231-251, and 261-281; these read LAKPGIIFGNLITLTGGFLLA, LPLFVYVMIGVALMIAAGCVF, LVTGDISVIQATIYGTILLIL, LVLYYLVNLLTLWIIIIGFIV, VLGGISGAIPPVAGYTAVVNI, LALFLILFFWQIPHSYAIAML, IMLFYLALFVVSCALPAVLGS, ADLFSFIVCMLVALFWMYKSI, and VFAKTVFKFSIIVITAICLTM.

It belongs to the UbiA prenyltransferase family. Protoheme IX farnesyltransferase subfamily.

It localises to the cell inner membrane. It catalyses the reaction heme b + (2E,6E)-farnesyl diphosphate + H2O = Fe(II)-heme o + diphosphate. It functions in the pathway porphyrin-containing compound metabolism; heme O biosynthesis; heme O from protoheme: step 1/1. In terms of biological role, converts heme B (protoheme IX) to heme O by substitution of the vinyl group on carbon 2 of heme B porphyrin ring with a hydroxyethyl farnesyl side group. The polypeptide is Protoheme IX farnesyltransferase (Francisella tularensis subsp. holarctica (strain LVS)).